Reading from the N-terminus, the 435-residue chain is Nuclear hormone receptor family member nhr-14 (435 aa).

The segment at residues 17–92 is a DNA-binding region (nuclear receptor); that stretch reads ADFCVVCGDK…DGMKPEAIQN (76 aa). 2 consecutive NR C4-type zinc fingers follow at residues 20–40 and 56–80; these read CVVCGDKAIGKHYGAVACNGC and CRFNKQCNIDKDHRNACRYCRFQKC. The segment at 91–126 is disordered; it reads QNERDRIGSTKRRKRSGANSENNSDSEGTPSPKIEV. The segment covering 107–119 has biased composition (polar residues); sequence GANSENNSDSEGT. Residues 131-355 form the NR LBD domain; the sequence is VSRKLIEMLL…KRDTISPKIE (225 aa).

This sequence belongs to the nuclear hormone receptor family. As to expression, expressed in intestine and head neurons in young adults.

The protein resides in the nucleus. In terms of biological role, orphan nuclear receptor. Transcriptional repressor of intestinal metal transporter smf-3 and genes of the innate immune response. Inhibits nuclear localization of transcription factor pqm-1; in response to pathogen stress, may facilitate translocation of pqm-1, leading to transcriptional activation of genes involved in innate immunity and iron uptake. In Caenorhabditis elegans, this protein is Nuclear hormone receptor family member nhr-14 (nhr-14).